Consider the following 314-residue polypeptide: Deoxyribonuclease-1-like 1 (314 aa).

Residues 1-37 (MPFGQPGFLWRVPDAHIAMRGLVMAPLLILLVGGTEA) form the signal peptide. A glycan (N-linked (GlcNAc...) asparagine) is linked at asparagine 102. Glutamate 113 is a catalytic residue. Residue asparagine 133 is glycosylated (N-linked (GlcNAc...) asparagine). Histidine 164 is a catalytic residue. The cysteines at positions 203 and 240 are disulfide-linked. N-linked (GlcNAc...) asparagine glycosylation is present at asparagine 239.

It belongs to the DNase I family. Highly expressed in heart and skeletal muscles. Low expression in brain and thymus. Intermediated expression in other tissues.

It is found in the endoplasmic reticulum. This is Deoxyribonuclease-1-like 1 (Dnase1l1) from Mus musculus (Mouse).